We begin with the raw amino-acid sequence, 401 residues long: Probable tRNA sulfurtransferase (401 aa).

Residues 60–165 form the THUMP domain; it reads EAVMARLKHV…EDATYLTFRD (106 aa). ATP-binding positions include 183–184, 208–209, arginine 265, glycine 287, and glutamine 296; these read MI and HF.

Belongs to the ThiI family.

It localises to the cytoplasm. The enzyme catalyses [ThiI sulfur-carrier protein]-S-sulfanyl-L-cysteine + a uridine in tRNA + 2 reduced [2Fe-2S]-[ferredoxin] + ATP + H(+) = [ThiI sulfur-carrier protein]-L-cysteine + a 4-thiouridine in tRNA + 2 oxidized [2Fe-2S]-[ferredoxin] + AMP + diphosphate. It catalyses the reaction [ThiS sulfur-carrier protein]-C-terminal Gly-Gly-AMP + S-sulfanyl-L-cysteinyl-[cysteine desulfurase] + AH2 = [ThiS sulfur-carrier protein]-C-terminal-Gly-aminoethanethioate + L-cysteinyl-[cysteine desulfurase] + A + AMP + 2 H(+). It participates in cofactor biosynthesis; thiamine diphosphate biosynthesis. Catalyzes the ATP-dependent transfer of a sulfur to tRNA to produce 4-thiouridine in position 8 of tRNAs, which functions as a near-UV photosensor. Also catalyzes the transfer of sulfur to the sulfur carrier protein ThiS, forming ThiS-thiocarboxylate. This is a step in the synthesis of thiazole, in the thiamine biosynthesis pathway. The sulfur is donated as persulfide by IscS. In Bacillus licheniformis (strain ATCC 14580 / DSM 13 / JCM 2505 / CCUG 7422 / NBRC 12200 / NCIMB 9375 / NCTC 10341 / NRRL NRS-1264 / Gibson 46), this protein is Probable tRNA sulfurtransferase.